The following is a 677-amino-acid chain: Regulator of G-protein signaling 9 (677 aa).

The DEP domain occupies 30-105 (PETGVRMQNQ…PDSSLYRFQT (76 aa)). The region spanning 219–280 (VTAVRKEIMY…ITDDTQFWDL (62 aa)) is the G protein gamma domain. Residues 295-416 (RWAFNFSELI…SPIYKEMLAK (122 aa)) enclose the RGS domain. 2 disordered regions span residues 530 to 571 (SSGL…RAPL) and 639 to 677 (DSGP…GKAG).

In terms of assembly, heterodimer with GNB5. Interacts with RGS7BP, leading to regulate the subcellular location of the heterodimer formed with GNB5. Component of the RGS9-1-Gbeta5 complex composed of RGS9 (RGS9-1), Gbeta5 (GNB5) and RGS9BP. Interacts with PDE6G and GNAT1. Expressed in the central nervous system. Isoform RGS9L is found in striatum, hypothalamus and nucleus accumbens while isoform RGS9S is expressed in retina and pineal gland.

Its subcellular location is the membrane. In terms of biological role, inhibits signal transduction by increasing the GTPase activity of G protein alpha subunits thereby driving them into their inactive GDP-bound form. Binds to GNAT1. Involved in phototransduction; key element in the recovery phase of visual transduction. The protein is Regulator of G-protein signaling 9 (Rgs9) of Rattus norvegicus (Rat).